A 375-amino-acid chain; its full sequence is MAKKDYYEILGVSKTAEEREIKKAYKRLAMKFHPDRNQEQDAEARFKEIKEAYEILTDAQKRAAYDQYGHAAFEQGGMGGGGGFGGGAEFSDIFGDVFGDIFGGGRRQRASRGSDLRYNMELSLEEAVRGVTKEIRIPTLEECGVCHGSGAKPGSSPVTCPTCHGQGQVQMRQGFFTVQQACPHCHGRGQIIKDPCNSCHGHGRVEKAKTLSVKIPAGVDTGDRIRLAGEGEAGEHGAPAGDLYVQVQVKAHPIFEREGNNLYCEVPINFAMAALGGEIEVPTLDGRVKLKVPAETQTGKLFRMRGKGVKSVRGGSQGDLLCRVVVETPVNLNDKQKQLLKELEESLGGPSGDKNSPRSKSFFDGVKKFFDDLTR.

The 65-residue stretch at 5–69 (DYYEILGVSK…QKRAAYDQYG (65 aa)) folds into the J domain. The CR-type zinc-finger motif lies at 130-208 (GVTKEIRIPT…CHGHGRVEKA (79 aa)). Zn(2+)-binding residues include Cys143, Cys146, Cys160, Cys163, Cys182, Cys185, Cys196, and Cys199. CXXCXGXG motif repeat units lie at residues 143-150 (CGVCHGSG), 160-167 (CPTCHGQG), 182-189 (CPHCHGRG), and 196-203 (CNSCHGHG).

This sequence belongs to the DnaJ family. Homodimer. Zn(2+) is required as a cofactor.

Its subcellular location is the cytoplasm. Functionally, participates actively in the response to hyperosmotic and heat shock by preventing the aggregation of stress-denatured proteins and by disaggregating proteins, also in an autonomous, DnaK-independent fashion. Unfolded proteins bind initially to DnaJ; upon interaction with the DnaJ-bound protein, DnaK hydrolyzes its bound ATP, resulting in the formation of a stable complex. GrpE releases ADP from DnaK; ATP binding to DnaK triggers the release of the substrate protein, thus completing the reaction cycle. Several rounds of ATP-dependent interactions between DnaJ, DnaK and GrpE are required for fully efficient folding. Also involved, together with DnaK and GrpE, in the DNA replication of plasmids through activation of initiation proteins. This is Chaperone protein DnaJ from Serratia proteamaculans (strain 568).